Consider the following 349-residue polypeptide: MNSTWDGNQSSHPFCLLALGYLETVRFCLLEVLIIVFLTVLIISGNIIVIFVFHCAPLLNHHSTSYFIQTMAYADLLVGVSCLVPSLSLLYYPLPIEEAMTCQVFGFVVSVLKSISMASLACISIDRYIAITKPLTYNTLVTPWRLRLCIFLIWLYSTLVFLPSFFHWGKPGYHGDVFQWCAESWHTNSYFTLFIVMMLYAPAALIVCFTYFNIFRICQQHTKEISERQARFSSQNGETGEPQTCPDKRYAMVLFRITSVFYVLWLPYIIYFLLESSTGCSSRLASFLTTWLAISNSFCNCIIYSLSNSVFQRGLKGLSGSLCTSCASHTTAKDPYTVRCKGPPNGSHI.

Topologically, residues Met-1 to Val-32 are extracellular. Asn-2 and Asn-8 each carry an N-linked (GlcNAc...) asparagine glycan. Residues Leu-33–Phe-53 traverse the membrane as a helical segment. The Cytoplasmic segment spans residues His-54–Asp-75. The helical transmembrane segment at Leu-76–Ile-96 threads the bilayer. The Extracellular segment spans residues Glu-97–Val-104. Residues Phe-105–Ile-125 form a helical membrane-spanning segment. Over Asp-126–Arg-147 the chain is Cytoplasmic. The helical transmembrane segment at Leu-148–Trp-168 threads the bilayer. At Gly-169 to Phe-191 the chain is on the extracellular side. The helical transmembrane segment at Thr-192–Phe-212 threads the bilayer. The Cytoplasmic portion of the chain corresponds to Asn-213 to Met-252. The chain crosses the membrane as a helical span at residues Val-253 to Leu-273. Residues Leu-274 to Arg-283 lie on the Extracellular side of the membrane. A helical transmembrane segment spans residues Leu-284–Tyr-304. Residues Ser-305–Ile-349 are Cytoplasmic-facing.

Belongs to the G-protein coupled receptor 1 family.

The protein resides in the cell membrane. Orphan receptor. This Mus musculus (Mouse) protein is Probable G-protein coupled receptor 21 (Gpr21).